A 307-amino-acid polypeptide reads, in one-letter code: Predicted GPI-anchored protein 44 (307 aa).

An N-terminal signal peptide occupies residues 1-22; sequence MLSTNNLLILLIFSFLITNVKS. Asparagine 146 and asparagine 217 each carry an N-linked (GlcNAc...) asparagine glycan. Positions 232 to 261 are disordered; the sequence is TPQPLLETPSQESSAPNIDSTTPTTIDNTV. Over residues 239 to 254 the composition is skewed to polar residues; sequence TPSQESSAPNIDSTTP. Residue glycine 286 is the site of GPI-anchor amidated glycine attachment. Positions 287-307 are cleaved as a propeptide — removed in mature form; sequence GAMGYPSISVALGLVFIAYLV.

The protein localises to the cell membrane. The protein is Predicted GPI-anchored protein 44 (PGA44) of Candida albicans (strain SC5314 / ATCC MYA-2876) (Yeast).